Reading from the N-terminus, the 351-residue chain is Histidine protein kinase SaeS (351 aa).

Helical transmembrane passes span 9 to 29 (IIIG…IAYI) and 40 to 60 (TLTL…SIFI). Positions 61–114 (NPLIQKIKQFNIKTKQFANGNYASNDKTFNSPKEIYELNQSFNKMASEITQQMN) constitute an HAMP domain. Residues 129–348 (NLAHDLKTPL…TMTVTLHKLD (220 aa)) enclose the Histidine kinase domain. H132 carries the phosphohistidine; by autocatalysis modification.

Post-translationally, autophosphorylated.

It is found in the cell membrane. The enzyme catalyses ATP + protein L-histidine = ADP + protein N-phospho-L-histidine.. Its function is as follows. Member of the two-component regulatory system SaeR/SaeS involved in the regulation of staphylococcal virulence factors in a strain-dependent fashion. Probably functions as a membrane-associated protein kinase that upon sensing the appropriate signal, autophosphorylates and in turn activates the cytosolic response regulator SaeR. In Staphylococcus aureus (strain bovine RF122 / ET3-1), this protein is Histidine protein kinase SaeS (saeS).